The following is a 471-amino-acid chain: Tryptophanase (471 aa).

3 positions are modified to N6-acetyllysine: lysine 5, lysine 115, and lysine 156. At lysine 270 the chain carries N6-(pyridoxal phosphate)lysine. N6-acetyllysine is present on lysine 450.

The protein belongs to the beta-eliminating lyase family. Homotetramer. It depends on pyridoxal 5'-phosphate as a cofactor.

It catalyses the reaction L-tryptophan + H2O = indole + pyruvate + NH4(+). Its pathway is amino-acid degradation; L-tryptophan degradation via pyruvate pathway; indole and pyruvate from L-tryptophan: step 1/1. In Escherichia coli (strain SMS-3-5 / SECEC), this protein is Tryptophanase.